The sequence spans 77 residues: Pi-stichotoxin-Hmg5a (77 aa).

An N-terminal signal peptide occupies residues 1–21 (MDYQRLLFLFAVAMVITTTVA). Positions 22–34 (LPQDTALMDGQLQ) are excised as a propeptide. Disulfide bonds link cysteine 40/cysteine 73, cysteine 42/cysteine 66, and cysteine 56/cysteine 74.

This sequence belongs to the sea anemone type 3 (BDS) potassium channel toxin family.

The protein resides in the secreted. It localises to the nematocyst. Functionally, toxin that inhibits rat ASIC3 channels (IC(50)=13.8 uM). Also able to bind T.californica muscle-type nicotinic acetylcholine receptors (nAChR), and human alpha-7/CHRNA7 nicotinic acetylcholine receptors. This chain is Pi-stichotoxin-Hmg5a, found in Heteractis magnifica (Magnificent sea anemone).